The following is a 299-amino-acid chain: Nucleotide-binding protein glr4163 (299 aa).

18-25 provides a ligand contact to ATP; the sequence is SPAGAGRT.

It belongs to the RapZ-like family.

Its function is as follows. Displays ATPase and GTPase activities. This Gloeobacter violaceus (strain ATCC 29082 / PCC 7421) protein is Nucleotide-binding protein glr4163.